The sequence spans 156 residues: UPF0232 protein BL0636 (156 aa).

Belongs to the UPF0232 family.

The polypeptide is UPF0232 protein BL0636 (Bifidobacterium longum (strain NCC 2705)).